We begin with the raw amino-acid sequence, 305 residues long: Phosphoribosylaminoimidazole-succinocarboxamide synthase (305 aa).

The protein belongs to the SAICAR synthetase family.

It catalyses the reaction 5-amino-1-(5-phospho-D-ribosyl)imidazole-4-carboxylate + L-aspartate + ATP = (2S)-2-[5-amino-1-(5-phospho-beta-D-ribosyl)imidazole-4-carboxamido]succinate + ADP + phosphate + 2 H(+). It participates in purine metabolism; IMP biosynthesis via de novo pathway; 5-amino-1-(5-phospho-D-ribosyl)imidazole-4-carboxamide from 5-amino-1-(5-phospho-D-ribosyl)imidazole-4-carboxylate: step 1/2. This is Phosphoribosylaminoimidazole-succinocarboxamide synthase from Tropheryma whipplei (strain TW08/27) (Whipple's bacillus).